We begin with the raw amino-acid sequence, 229 residues long: DNA mismatch repair protein MutH (229 aa).

It belongs to the MutH family.

It is found in the cytoplasm. Its function is as follows. Sequence-specific endonuclease that cleaves unmethylated GATC sequences. It is involved in DNA mismatch repair. The polypeptide is DNA mismatch repair protein MutH (Escherichia coli (strain K12 / MC4100 / BW2952)).